The sequence spans 234 residues: Transcriptional regulatory protein CitB (234 aa).

Residues 5–121 (TTLIVEDEPM…RLQHTLERFA (117 aa)) enclose the Response regulatory domain. Asp-56 bears the 4-aspartylphosphate mark. Residues 181 to 200 (ADSLARILGSSKTTARRYLE) constitute a DNA-binding region (H-T-H motif).

In terms of assembly, in vitro CitB and the CitA kinase domain form a complex, formation of which is enhanced by ATP. Phosphorylated by CitA.

It localises to the cytoplasm. In terms of biological role, member of the two-component regulatory system CitA/CitB essential for expression of citrate-specific fermentation genes. Phosphorylated CitB binds to two sites in the citS-citC intergenic region where it probably activates transcription of both genes. This Klebsiella pneumoniae protein is Transcriptional regulatory protein CitB (citB).